Consider the following 457-residue polypeptide: Phosphoglucosamine mutase (457 aa).

Ser-106 serves as the catalytic Phosphoserine intermediate. 4 residues coordinate Mg(2+): Ser-106, Asp-245, Asp-247, and Asp-249. Position 106 is a phosphoserine (Ser-106).

Belongs to the phosphohexose mutase family. Mg(2+) is required as a cofactor. In terms of processing, activated by phosphorylation.

The catalysed reaction is alpha-D-glucosamine 1-phosphate = D-glucosamine 6-phosphate. Its function is as follows. Catalyzes the conversion of glucosamine-6-phosphate to glucosamine-1-phosphate. In Methylibium petroleiphilum (strain ATCC BAA-1232 / LMG 22953 / PM1), this protein is Phosphoglucosamine mutase.